The sequence spans 503 residues: Inosine-5'-monophosphate dehydrogenase (503 aa).

K(+) contacts are provided by Gly-20 and Ser-22. 2 consecutive CBS domains span residues 103–163 (FVVS…ETKV) and 167–228 (MTPF…LVDS). 261-263 (DSS) is a binding site for NAD(+). Residues Asp-264, Phe-266, Gly-314, and Gly-316 each coordinate K(+). 312 to 314 (GIG) is an NAD(+) binding site. Ser-317 contacts IMP. Cys-319 contacts K(+). Cys-319 serves as the catalytic Thioimidate intermediate. IMP-binding positions include 358-360 (DGG), 381-382 (GR), and 405-409 (YWGEG). Arg-418 functions as the Proton acceptor in the catalytic mechanism. Glu-431 lines the IMP pocket. K(+)-binding residues include Asn-460, Glu-485, Gly-486, and Gly-487.

It belongs to the IMPDH/GMPR family. As to quaternary structure, homotetramer. Requires K(+) as cofactor.

It localises to the cytoplasm. It catalyses the reaction IMP + NAD(+) + H2O = XMP + NADH + H(+). The protein operates within purine metabolism; XMP biosynthesis via de novo pathway; XMP from IMP: step 1/1. Mycophenolic acid (MPA) is a non-competitive inhibitor that prevents formation of the closed enzyme conformation by binding to the same site as the amobile flap. In contrast, mizoribine monophosphate (MZP) is a competitive inhibitor that induces the closed conformation. MPA is a potent inhibitor of mammalian IMPDHs but a poor inhibitor of the bacterial enzymes. MZP is a more potent inhibitor of bacterial IMPDH. Its function is as follows. Catalyzes the conversion of inosine 5'-phosphate (IMP) to xanthosine 5'-phosphate (XMP), the first committed and rate-limiting step in the de novo synthesis of guanine nucleotides, and therefore plays an important role in the regulation of cell growth. Could also have a single-stranded nucleic acid-binding activity and could play a role in RNA and/or DNA metabolism. In Tritrichomonas foetus (Trichomonas foetus), this protein is Inosine-5'-monophosphate dehydrogenase.